The following is a 131-amino-acid chain: Interleukin-13 (131 aa).

A signal peptide spans Met-1 to Ala-18. Asn-39, Asn-50, Asn-58, and Asn-74 each carry an N-linked (GlcNAc...) asparagine glycan. 2 cysteine pairs are disulfide-bonded: Cys-49–Cys-78 and Cys-66–Cys-92.

The protein belongs to the IL-4/IL-13 family. In terms of assembly, interacts with IL13RA2.

The protein resides in the secreted. Cytokine that plays important roles in allergic inflammation and immune response to parasite infection. Synergizes with IL2 in regulating interferon-gamma synthesis. Stimulates B-cell proliferation, and activation of eosinophils, basophils, and mast cells. Plays an important role in controlling IL33 activity by modulating the production of transmembrane and soluble forms of interleukin-1 receptor-like 1/IL1RL1. Displays the capacity to antagonize Th1-driven proinflammatory immune response and downregulates synthesis of many proinflammatory cytokines including IL1, IL6, IL10, IL12 and TNF-alpha through a mechanism that partially involves suppression of NF-kappa-B. Also functions on nonhematopoietic cells, including endothelial cells where it induces vascular cell adhesion protein 1/VCAM1, which is important in the recruitment of eosinophils. Exerts its biological effects through its receptors which comprises the IL4R chain and the IL13RA1 chain, to activate JAK1 and TYK2, leading to the activation of STAT6. Aside from IL13RA1, another receptor IL13RA2 acts as a high affinity decoy for IL13 and mediates internalization and depletion of extracellular IL13. The chain is Interleukin-13 (IL13) from Sus scrofa (Pig).